The sequence spans 729 residues: MSGWDEGAVFYSDQAQFPRGGPGGDPSADLTRHSALRKFKEFLRGFTGPTGDFPYRESLVHNRDHVTVAIEDLDAFDAELSDKIRKSPADYLPLFETAASEVLASLRSKVAGETGEMEEPASGDVQIFLSSKENCLSMRSIGADYMSKLVKIAGITIAASRVKAKATHVTLLCKNCRSVKTVPCRPGLGGAIVPRSCDHVPQPGEEPCPLDPWIAVPDKSKYVDLQTLKLQENPEDVPTGELPRNMLLSVDRHLVQTIVPGTRLTVIGIYSVYQASANQKGAVGVKQPYIRVVGLEQSRDANSNGPSNFTLDEEMEFKEFAQRPDAYVKICSMIGPSIYGHSDVKKAIACLLFGGSKKRLPDGVRLRGDIHVLLLGDPSTAKSQFLKFVEKTAPIAVYTSGKGSSAAGLTASVIRDGSSREFYLEGGAMVLADGGVVCIDEFDKMRPEDRVAIHEAMEQQTISIAKAGITTVLNSRTSVLAAANPIAGRYDDLKTAQDNIDLQTTILSRFDLIFIVKDVRMYDQDKRIASHIIKVHASGAAASSKNTDASEGENWLKRYIEYCRVTCKPRLSEKAAEMLQNKYVEIRQKMRQQAHETGRAAAIPITVRQLEAIIRLSESLAKMRLTSVATPEHVEEAFRLFNVSTVDAARSGINEHLNLSPDIANEIKQAEAQIKRRMGIGSHISERRLIDELNRMGMNESIVRRALLIMHQRDEVEYKRERHVIVRKA.

Residues 326-532 (AYVKICSMIG…DQDKRIASHI (207 aa)) form the MCM domain. 376-383 (GDPSTAKS) is a binding site for ATP. Positions 508–511 (SRFD) match the Arginine finger motif.

This sequence belongs to the MCM family. Component of the minichromosome maintenance (MCM) complex, a heterotetramer composed of MCM2, MCM3, MCM4, MCM5, MCM6 and MCM7.

The protein resides in the nucleus. It carries out the reaction ATP + H2O = ADP + phosphate + H(+). In terms of biological role, probable component of the MCM2-7 complex (MCM complex) that may function as a DNA helicase and which is essential to undergo a single round of replication initiation and elongation per cell cycle in eukaryotic cells. In Oryza sativa subsp. indica (Rice), this protein is DNA replication licensing factor MCM5 (MCM5).